A 351-amino-acid polypeptide reads, in one-letter code: S-adenosylmethionine:tRNA ribosyltransferase-isomerase (351 aa).

It belongs to the QueA family. As to quaternary structure, monomer.

It localises to the cytoplasm. It catalyses the reaction 7-aminomethyl-7-carbaguanosine(34) in tRNA + S-adenosyl-L-methionine = epoxyqueuosine(34) in tRNA + adenine + L-methionine + 2 H(+). The protein operates within tRNA modification; tRNA-queuosine biosynthesis. In terms of biological role, transfers and isomerizes the ribose moiety from AdoMet to the 7-aminomethyl group of 7-deazaguanine (preQ1-tRNA) to give epoxyqueuosine (oQ-tRNA). The protein is S-adenosylmethionine:tRNA ribosyltransferase-isomerase of Fusobacterium nucleatum subsp. nucleatum (strain ATCC 25586 / DSM 15643 / BCRC 10681 / CIP 101130 / JCM 8532 / KCTC 2640 / LMG 13131 / VPI 4355).